A 338-amino-acid polypeptide reads, in one-letter code: Nickel transporter NixA (338 aa).

A run of 8 helical transmembrane segments spans residues 11–31 (WLPYIAIVILLHVIGFSFLWI), 37–57 (HILFGMGILAYTLGLRHAFDA), 79–99 (GVGFYFSIGHSSVVFLMAVFL), 127–147 (FFLVLIGVLNLIILISLINLF), 187–207 (VLPLGFLFGLGFDTASEIALL), 217–237 (AISFIGILSLPILFASGMSLL), 266–286 (ITAISVMAALVIGMIELLQIL), and 307–327 (YLGYILVALFLITWLISSLIW).

Belongs to the NiCoT transporter (TC 2.A.52) family.

It is found in the cell membrane. Functionally, secondary nickel transporter. Required for full urease activity. The polypeptide is Nickel transporter NixA (Staphylococcus aureus (strain NCTC 8325 / PS 47)).